Here is a 132-residue protein sequence, read N- to C-terminus: Telomere bouquet protein 1 (132 aa).

In terms of assembly, interacts with bqt2 and sad1. The bqt1-bqt2-sad1 complex binds rap1.

It is found in the cytoplasm. The protein localises to the cytoskeleton. It localises to the microtubule organizing center. The protein resides in the spindle pole body. Its subcellular location is the chromosome. It is found in the telomere. Its function is as follows. Involved in chromosome segregation. During meiotic prophase, connects telomeres to the spindle pole body by forming a bridge between the telomere protein rap1 and the spindle pole body protein sad1. The sequence is that of Telomere bouquet protein 1 (bqt1) from Schizosaccharomyces pombe (strain 972 / ATCC 24843) (Fission yeast).